We begin with the raw amino-acid sequence, 292 residues long: 4-hydroxy-tetrahydrodipicolinate synthase (292 aa).

Residue Thr-45 coordinates pyruvate. The active-site Proton donor/acceptor is Tyr-133. Catalysis depends on Lys-161, which acts as the Schiff-base intermediate with substrate. Ile-203 is a binding site for pyruvate.

It belongs to the DapA family. In terms of assembly, homotetramer; dimer of dimers.

Its subcellular location is the cytoplasm. It carries out the reaction L-aspartate 4-semialdehyde + pyruvate = (2S,4S)-4-hydroxy-2,3,4,5-tetrahydrodipicolinate + H2O + H(+). It participates in amino-acid biosynthesis; L-lysine biosynthesis via DAP pathway; (S)-tetrahydrodipicolinate from L-aspartate: step 3/4. Its function is as follows. Catalyzes the condensation of (S)-aspartate-beta-semialdehyde [(S)-ASA] and pyruvate to 4-hydroxy-tetrahydrodipicolinate (HTPA). In Escherichia fergusonii (strain ATCC 35469 / DSM 13698 / CCUG 18766 / IAM 14443 / JCM 21226 / LMG 7866 / NBRC 102419 / NCTC 12128 / CDC 0568-73), this protein is 4-hydroxy-tetrahydrodipicolinate synthase.